The chain runs to 212 residues: MSLFDKKHLVTQADALPGRNTPMPIATLHAVNEHSMTNVPAGMEIAYFAMGCFWGVERLFWQLPGVYSTAAGYAGGYTPNPTYREVCSGQTGHAEAVRIVYDPAVIRYEQLLQTFWENHDPTQGMQQGNDHGTQYRSAIYPLTPEQNAAAHASRERFQAAMAAAGDHRPITTEIAHATPFYYAEDEHQQYLHKNPYGYCGIGGIGVCLPPDA.

Cys-52 is a catalytic residue.

It belongs to the MsrA Met sulfoxide reductase family.

It catalyses the reaction L-methionyl-[protein] + [thioredoxin]-disulfide + H2O = L-methionyl-(S)-S-oxide-[protein] + [thioredoxin]-dithiol. It carries out the reaction [thioredoxin]-disulfide + L-methionine + H2O = L-methionine (S)-S-oxide + [thioredoxin]-dithiol. Its function is as follows. Has an important function as a repair enzyme for proteins that have been inactivated by oxidation. Catalyzes the reversible oxidation-reduction of methionine sulfoxide in proteins to methionine. This Salmonella agona (strain SL483) protein is Peptide methionine sulfoxide reductase MsrA.